The chain runs to 442 residues: Cell cycle checkpoint control protein RAD9B (442 aa).

Disordered regions lie at residues 370–392 (EVPE…TEDV) and 422–442 (QSLA…FSTF). Ser-387 carries the phosphoserine modification.

This sequence belongs to the rad9 family. As to quaternary structure, interacts with HUS1, HUS1B, RAD1, RAD9A and RAD17.

The sequence is that of Cell cycle checkpoint control protein RAD9B (RAD9B) from Bos taurus (Bovine).